The primary structure comprises 249 residues: uncharacterized protein (249 aa).

Belongs to the ycf73 family.

The protein resides in the plastid. Its subcellular location is the chloroplast. This is an uncharacterized protein from Oryza sativa (Rice).